A 347-amino-acid chain; its full sequence is Gas vesicle ATPase GvpN1 (347 aa).

Over residues 1–11 the composition is skewed to basic residues; it reads MTNESRKRKVR. The interval 1–64 is disordered; that stretch reads MTNESRKRKV…EGFVPEEQSF (64 aa). Over residues 18 to 55 the composition is skewed to basic and acidic residues; the sequence is SRGDKKQGRSQSRDDKEIERLERQNDARGQESSTHVDE. 91 to 98 lines the ATP pocket; it reads GPTGCGKT.

Belongs to the CbbQ/NirQ/NorQ/GpvN family. In terms of assembly, forms homodimers, forms a GvpN1-GvpO1 heterodimer, interacts with GvpC1 (via the latter's C-terminus) and GvpL, might interact with GvpA1.

It localises to the gas vesicle. It is found in the cytoplasm. It catalyses the reaction ATP + H2O = ADP + phosphate + H(+). An ATPase that functions in gas vesicle formation. A minor component of the gas vesicle, also found in soluble extracts. Probably enhances gas vesicle formation. Gas vesicles are hollow, gas filled proteinaceous nanostructures found in several microbial planktonic microorganisms. They allow positioning of halobacteria at the optimal depth for growth in the poorly aerated, shallow brine pools of their habitat. In terms of biological role, expression of a 9.5 kb p-vac DNA fragment containing 2 divergently transcribed regions (gvpD-gvpE-gvpF-gvpG-gvpH-gvpI-gvpJ-gvpK-gvpL-gvpM and gvpA-gvpC-gvpN-gvpO) allows H.volcanii to produce gas vesicles. A similar region restores gas vesicle production in H.halobium without the p-vac locus, but which still have the c-vac locus. The protein is Gas vesicle ATPase GvpN1 (gvpN11) of Halobacterium salinarum (strain ATCC 700922 / JCM 11081 / NRC-1) (Halobacterium halobium).